The following is a 235-amino-acid chain: Putative uridine kinase C227.14 (235 aa).

Position 36–43 (36–43 (GGPGSGKS)) interacts with ATP.

Belongs to the uridine kinase family.

It is found in the cytoplasm. The protein localises to the nucleus. The enzyme catalyses uridine + ATP = UMP + ADP + H(+). The catalysed reaction is cytidine + ATP = CMP + ADP + H(+). It functions in the pathway pyrimidine metabolism; CTP biosynthesis via salvage pathway; CTP from cytidine: step 1/3. Its pathway is pyrimidine metabolism; UMP biosynthesis via salvage pathway; UMP from uridine: step 1/1. This chain is Putative uridine kinase C227.14, found in Schizosaccharomyces pombe (strain 972 / ATCC 24843) (Fission yeast).